We begin with the raw amino-acid sequence, 262 residues long: Hydroxyethylthiazole kinase (262 aa).

Methionine 43 is a substrate binding site. ATP contacts are provided by arginine 118 and threonine 164. Position 191 (alanine 191) interacts with substrate.

The protein belongs to the Thz kinase family. The cofactor is Mg(2+).

It catalyses the reaction 5-(2-hydroxyethyl)-4-methylthiazole + ATP = 4-methyl-5-(2-phosphooxyethyl)-thiazole + ADP + H(+). It functions in the pathway cofactor biosynthesis; thiamine diphosphate biosynthesis; 4-methyl-5-(2-phosphoethyl)-thiazole from 5-(2-hydroxyethyl)-4-methylthiazole: step 1/1. Catalyzes the phosphorylation of the hydroxyl group of 4-methyl-5-beta-hydroxyethylthiazole (THZ). This Cereibacter sphaeroides (strain ATCC 17029 / ATH 2.4.9) (Rhodobacter sphaeroides) protein is Hydroxyethylthiazole kinase.